A 423-amino-acid chain; its full sequence is Maltoporin 1 (423 aa).

The first 23 residues, 1–23 (MNTTLRALSVALAAALIAPSAFA), serve as a signal peptide directing secretion.

This sequence belongs to the porin LamB (TC 1.B.3) family. In terms of assembly, homotrimer formed of three 18-stranded antiparallel beta-barrels, containing three independent channels.

It is found in the cell outer membrane. The catalysed reaction is beta-maltose(in) = beta-maltose(out). Its function is as follows. Involved in the transport of maltose and maltodextrins. In Klebsiella pneumoniae subsp. pneumoniae (strain ATCC 700721 / MGH 78578), this protein is Maltoporin 1.